The sequence spans 191 residues: Imidazoleglycerol-phosphate dehydratase (191 aa).

The protein belongs to the imidazoleglycerol-phosphate dehydratase family.

It localises to the cytoplasm. It catalyses the reaction D-erythro-1-(imidazol-4-yl)glycerol 3-phosphate = 3-(imidazol-4-yl)-2-oxopropyl phosphate + H2O. Its pathway is amino-acid biosynthesis; L-histidine biosynthesis; L-histidine from 5-phospho-alpha-D-ribose 1-diphosphate: step 6/9. This Methanosarcina mazei (strain ATCC BAA-159 / DSM 3647 / Goe1 / Go1 / JCM 11833 / OCM 88) (Methanosarcina frisia) protein is Imidazoleglycerol-phosphate dehydratase.